Reading from the N-terminus, the 349-residue chain is DNA polymerase IV (349 aa).

Residues 7 to 188 (IIHIDMDYFF…LPVKKLFGVG (182 aa)) form the UmuC domain. Mg(2+) contacts are provided by Asp-11 and Asp-106. Residue Glu-107 is part of the active site.

It belongs to the DNA polymerase type-Y family. In terms of assembly, monomer. Mg(2+) is required as a cofactor.

The protein resides in the cytoplasm. The enzyme catalyses DNA(n) + a 2'-deoxyribonucleoside 5'-triphosphate = DNA(n+1) + diphosphate. Poorly processive, error-prone DNA polymerase involved in untargeted mutagenesis. Copies undamaged DNA at stalled replication forks, which arise in vivo from mismatched or misaligned primer ends. These misaligned primers can be extended by PolIV. Exhibits no 3'-5' exonuclease (proofreading) activity. May be involved in translesional synthesis, in conjunction with the beta clamp from PolIII. The sequence is that of DNA polymerase IV from Francisella tularensis subsp. holarctica (strain OSU18).